We begin with the raw amino-acid sequence, 267 residues long: Ras-related protein Rab-36 (267 aa).

8 residues coordinate GTP: Val68, Gly69, Lys70, Thr71, Ser72, Asp83, Tyr86, and Thr89. Position 71 (Thr71) interacts with Mg(2+). The Switch 1 signature appears at 76 to 94 (RFCKNVFDRDYKATIGVDF). Thr89 and Asp112 together coordinate Mg(2+). The Switch 2 motif lies at 113–132 (TAGQEKFKCIASAYYRGAQV). Gly115, Lys172, Asp174, Ser203, Ala204, and Lys205 together coordinate GTP. The interval 243 to 267 (GDLIQMEGSPPETQESKRPSSLGCC) is disordered. Residues Cys266 and Cys267 are each lipidated (S-geranylgeranyl cysteine).

The protein belongs to the small GTPase superfamily. Rab family. Requires Mg(2+) as cofactor. As to expression, ubiquitously present in all tissues examined.

Its subcellular location is the golgi apparatus membrane. The enzyme catalyses GTP + H2O = GDP + phosphate + H(+). Its activity is regulated as follows. Regulated by guanine nucleotide exchange factors (GEFs) which promote the exchange of bound GDP for free GTP. Regulated by GTPase activating proteins (GAPs) which increase the GTP hydrolysis activity. Inhibited by GDP dissociation inhibitors (GDIs). Its function is as follows. The small GTPases Rab are key regulators of intracellular membrane trafficking, from the formation of transport vesicles to their fusion with membranes. Rabs cycle between an inactive GDP-bound form and an active GTP-bound form that is able to recruit to membranes different sets of downstream effectors directly responsible for vesicle formation, movement, tethering and fusion. The chain is Ras-related protein Rab-36 from Homo sapiens (Human).